Consider the following 1638-residue polypeptide: Chromatin-remodeling ATPase INO80 (1638 aa).

A disordered region spans residues 41-93; the sequence is SLRKPLSSDEETDDEHVVKREHDVQDSDDSSTVGVVRMKQSSKRKSRLLASKE. Serine 47 and serine 48 each carry phosphoserine. Residue threonine 52 is modified to Phosphothreonine. The segment covering 55-65 has biased composition (basic and acidic residues); that stretch reads EHVVKREHDVQ. Phosphoserine is present on residues serine 67 and serine 70. A coiled-coil region spans residues 136–161; sequence VQQLLREHVREQRQRKNYYKKAANAQ. The tract at residues 201–259 is disordered; sequence RLAEAQAGPKPPKQRRRGRKKRDNMGSPESGEVPPSELGKYTFGDTLPNNEDDDEDGGE. The segment covering 212-222 has biased composition (basic residues); it reads PKQRRRGRKKR. Phosphoserine occurs at positions 227 and 230. Residues 250–259 show a composition bias toward acidic residues; that stretch reads NEDDDEDGGE. The 126-residue stretch at 313–438 folds into the DBINO domain; that stretch reads IWQIMSKKES…AHFMSKKLGQ (126 aa). The disordered stretch occupies residues 499 to 528; that stretch reads KEKEEEEQAQESVEDIKPEPRPEMKDLPQP. Residues 502 to 511 show a composition bias toward acidic residues; that stretch reads EEEEQAQESV. A compositionally biased stretch (basic and acidic residues) spans 512–526; that stretch reads EDIKPEPRPEMKDLP. One can recognise a Helicase ATP-binding domain in the interval 547-718; sequence ANIYDQGISG…WALLHFIMPT (172 aa). Residue 560-567 participates in ATP binding; sequence DEMGLGKT. The Helicase C-terminal domain maps to 1160–1315; it reads VLDNLLTRLK…GGNFKPDTLK (156 aa). Disordered regions lie at residues 1335-1364 and 1463-1638; these read QEAK…DVNM and FLDD…VGPE. A compositionally biased stretch (polar residues) spans 1338 to 1350; the sequence is KLQSSSPIPAATQ. Over residues 1473 to 1495 the composition is skewed to basic residues; sequence MRRRHHPRGTRRGRPRGSTRRGG. Low complexity-rich tracts occupy residues 1505–1534 and 1618–1627; these read TPTQ…GTSS and SPATSRAPSP.

This sequence belongs to the SNF2/RAD54 helicase family. As to quaternary structure, component of the chromatin remodeling Ino80 complex.

It localises to the nucleus. The catalysed reaction is ATP + H2O = ADP + phosphate + H(+). Its function is as follows. ATPase component of the chromatin remodeling INO80 complex which is involved in transcriptional regulation, DNA replication and DNA repair. Binds DNA. As part of the INO80 complex, remodels chromatin by shifting nucleosomes. The protein is Chromatin-remodeling ATPase INO80 of Drosophila melanogaster (Fruit fly).